The following is a 131-amino-acid chain: Holo-[acyl-carrier-protein] synthase (131 aa).

The Mg(2+) site is built by D8 and E59.

The protein belongs to the P-Pant transferase superfamily. AcpS family. Mg(2+) is required as a cofactor.

Its subcellular location is the cytoplasm. The catalysed reaction is apo-[ACP] + CoA = holo-[ACP] + adenosine 3',5'-bisphosphate + H(+). Its function is as follows. Transfers the 4'-phosphopantetheine moiety from coenzyme A to a Ser of acyl-carrier-protein. The protein is Holo-[acyl-carrier-protein] synthase of Rickettsia conorii (strain ATCC VR-613 / Malish 7).